The primary structure comprises 612 residues: UPF0329 protein ECU05_1680/ECU11_0050 (612 aa).

Over residues 304-330 (RQRREMEKKEEEKKKEEEKKKEEEKRK) the composition is skewed to basic and acidic residues. Residues 304–424 (RQRREMEKKE…RKRYKIHRRV (121 aa)) are disordered. Over residues 331 to 349 (EEKKKKKEEKKEEKKKKKE) the composition is skewed to basic residues. Over residues 350–388 (EKKEEKKEEKKEEKKEEKKEEKKEEKKEEKSGKSLREGE) the composition is skewed to basic and acidic residues.

This sequence belongs to the UPF0329 family.

This Encephalitozoon cuniculi (strain GB-M1) (Microsporidian parasite) protein is UPF0329 protein ECU05_1680/ECU11_0050.